The chain runs to 41 residues: Large ribosomal subunit protein bL36 (41 aa).

The interval 1–21 (MKIRNSLKSLRGRHRDNQLVR) is disordered.

The protein belongs to the bacterial ribosomal protein bL36 family.

This is Large ribosomal subunit protein bL36 from Methylobacterium sp. (strain 4-46).